Reading from the N-terminus, the 130-residue chain is Glycoprotein hormone alpha-2 (130 aa).

The signal sequence occupies residues 1 to 22; sequence MPMAPRVLLFCLLGLAVTEGHG. 4 cysteine pairs are disulfide-bonded: C32–C90, C49–C104, C58–C120, and C62–C122. Residues N38 and N82 are each glycosylated (N-linked (GlcNAc...) asparagine).

It belongs to the glycoprotein hormones subunit alpha family. In terms of assembly, heterodimer with GPHB5; this heterodimer interacts with thyroid-stimulating hormone receptor (TSHR), and hence stimulates cAMP production.

Its subcellular location is the secreted. Functions as a heterodimeric glycoprotein hormone with GPHB5 able to bind and activate the thyroid-stimulating hormone receptor (TSHR), leading to increased cAMP production. Plays a central role in controlling thyroid cell metabolism. This chain is Glycoprotein hormone alpha-2 (Gpha2), found in Rattus norvegicus (Rat).